A 942-amino-acid polypeptide reads, in one-letter code: Protein inturned (942 aa).

Residues 1 to 52 (MASVASCDSRPSSDELPGDPSSQEEDEDYDFEDRVSDSGSYSSASSDYDDLE) form a disordered region. The span at 22–31 (SQEEDEDYDF) shows a compositional bias: acidic residues. A compositionally biased stretch (low complexity) spans 37 to 46 (DSGSYSSASS). Positions 185-263 (LVGIIHQTKW…PMQVKLTFEN (79 aa)) constitute a PDZ domain. Phosphoserine is present on residues serine 670 and serine 674. The segment at 704 to 754 (TRKPSPSCSSGGSDNGCEGGEDDGFSPHTTPDAVRKQRESQGSDGLEESGT) is disordered.

It belongs to the inturned family. As to quaternary structure, component of the CPLANE (ciliogenesis and planar polarity effectors) complex, composed of INTU, FUZ and WDPCP. Interacts with CPLANE1. Interacts with NPHP4 and DAAM1; INTU is mediating the interaction between NPHP4 and DAAM1.

The protein resides in the cytoplasm. The protein localises to the cell surface. Its subcellular location is the cytoskeleton. It localises to the cilium basal body. It is found in the microtubule organizing center. The protein resides in the centrosome. The protein localises to the centriole. Functionally, plays a key role in ciliogenesis and embryonic development. Regulator of cilia formation by controlling the organization of the apical actin cytoskeleton and the positioning of the basal bodies at the apical cell surface, which in turn is essential for the normal orientation of elongating ciliary microtubules. Plays a key role in definition of cell polarity via its role in ciliogenesis but not via conversion extension. Has an indirect effect on hedgehog signaling. Proposed to function as core component of the CPLANE (ciliogenesis and planar polarity effectors) complex involved in the recruitment of peripheral IFT-A proteins to basal bodies. Required for recruitment of CPLANE2 to the mother centriole. Binds phosphatidylinositol 3-phosphate with highest affinity, followed by phosphatidylinositol 4-phosphate and phosphatidylinositol 5-phosphate. This chain is Protein inturned (INTU), found in Homo sapiens (Human).